A 340-amino-acid chain; its full sequence is DNA-directed RNA polymerase subunit alpha (340 aa).

Residues 1–233 (MIRDEISVST…DLFIPFLRAE (233 aa)) are alpha N-terminal domain (alpha-NTD). The segment at 268–340 (AFKHIFIDQS…DLPKNKFQIH (73 aa)) is alpha C-terminal domain (alpha-CTD).

Belongs to the RNA polymerase alpha chain family. In terms of assembly, in plastids the minimal PEP RNA polymerase catalytic core is composed of four subunits: alpha, beta, beta', and beta''. When a (nuclear-encoded) sigma factor is associated with the core the holoenzyme is formed, which can initiate transcription.

It localises to the plastid. It is found in the chloroplast. It carries out the reaction RNA(n) + a ribonucleoside 5'-triphosphate = RNA(n+1) + diphosphate. Its function is as follows. DNA-dependent RNA polymerase catalyzes the transcription of DNA into RNA using the four ribonucleoside triphosphates as substrates. This chain is DNA-directed RNA polymerase subunit alpha, found in Cycas taitungensis (Prince sago).